A 269-amino-acid chain; its full sequence is Eukaryotic translation initiation factor 3 subunit G (269 aa).

Residues alanine 140–aspartate 181 form a disordered region. Residues isoleucine 141–serine 154 are compositionally biased toward gly residues. Position 161 is a phosphoserine (serine 161). In terms of domain architecture, RRM spans lysine 184–proline 263.

The protein belongs to the eIF-3 subunit G family. Component of the eukaryotic translation initiation factor 3 (eIF-3) complex.

The protein resides in the cytoplasm. Functionally, RNA-binding component of the eukaryotic translation initiation factor 3 (eIF-3) complex, which is involved in protein synthesis of a specialized repertoire of mRNAs and, together with other initiation factors, stimulates binding of mRNA and methionyl-tRNAi to the 40S ribosome. The eIF-3 complex specifically targets and initiates translation of a subset of mRNAs involved in cell proliferation. This subunit can bind 18S rRNA. The polypeptide is Eukaryotic translation initiation factor 3 subunit G (Kluyveromyces lactis (strain ATCC 8585 / CBS 2359 / DSM 70799 / NBRC 1267 / NRRL Y-1140 / WM37) (Yeast)).